The following is a 721-amino-acid chain: Polyribonucleotide nucleotidyltransferase (721 aa).

Residues Asp-486 and Asp-492 each coordinate Mg(2+). Positions 553-612 (PKIVQLQIDIDKISLVIGSTGKTVKAITDEFEVKVQIEQNGKIILFGDDDFKMQKAKERI) constitute a KH domain. The S1 motif domain maps to 622-716 (GEIYEGIVKK…KFGKIDLEVV (95 aa)).

The protein belongs to the polyribonucleotide nucleotidyltransferase family. It depends on Mg(2+) as a cofactor.

The protein resides in the cytoplasm. It carries out the reaction RNA(n+1) + phosphate = RNA(n) + a ribonucleoside 5'-diphosphate. Its function is as follows. Involved in mRNA degradation. Catalyzes the phosphorolysis of single-stranded polyribonucleotides processively in the 3'- to 5'-direction. In Borrelia garinii subsp. bavariensis (strain ATCC BAA-2496 / DSM 23469 / PBi) (Borreliella bavariensis), this protein is Polyribonucleotide nucleotidyltransferase.